A 695-amino-acid polypeptide reads, in one-letter code: Elongation factor G 2 (695 aa).

In terms of domain architecture, tr-type G spans 5–280 (SKYRNIGIFA…AVVDYLPSPT (276 aa)). Residues 14–21 (AHVDAGKT), 78–82 (DTPGH), and 132–135 (NKLD) each bind GTP.

The protein belongs to the TRAFAC class translation factor GTPase superfamily. Classic translation factor GTPase family. EF-G/EF-2 subfamily.

It localises to the cytoplasm. Catalyzes the GTP-dependent ribosomal translocation step during translation elongation. During this step, the ribosome changes from the pre-translocational (PRE) to the post-translocational (POST) state as the newly formed A-site-bound peptidyl-tRNA and P-site-bound deacylated tRNA move to the P and E sites, respectively. Catalyzes the coordinated movement of the two tRNA molecules, the mRNA and conformational changes in the ribosome. This Vibrio vulnificus (strain YJ016) protein is Elongation factor G 2.